The following is a 196-amino-acid chain: MNYPNGQQKVTTNHVVQKQDNRMFSNRGMSLEDDINATNEFYLETNQAVIHKKPTPVQIVNVHYPKRSAAVITEAYFKQASTTDYNGIYKGKYIDFEAKETKNKTSFPLANIHEHQINHMQKVIDQQGICFMLIRFTAHDETYLLDAKALLTFWNLKQDGGKKSIPYDMIRNQSQLIPFHYQKRVDYLAAVDKLYF.

Positions 82, 84, 97, and 116 each coordinate Mg(2+).

It belongs to the RecU family. It depends on Mg(2+) as a cofactor.

It localises to the cytoplasm. The enzyme catalyses Endonucleolytic cleavage at a junction such as a reciprocal single-stranded crossover between two homologous DNA duplexes (Holliday junction).. In terms of biological role, endonuclease that resolves Holliday junction intermediates in genetic recombination. Cleaves mobile four-strand junctions by introducing symmetrical nicks in paired strands. Promotes annealing of linear ssDNA with homologous dsDNA. Required for DNA repair, homologous recombination and chromosome segregation. This chain is Holliday junction resolvase RecU, found in Oceanobacillus iheyensis (strain DSM 14371 / CIP 107618 / JCM 11309 / KCTC 3954 / HTE831).